We begin with the raw amino-acid sequence, 204 residues long: Abscisic acid receptor PYL3 (204 aa).

Residues 40–191 (HEPRDHQCSS…NLKSLAEVSE (152 aa)) form an START-like region. Cysteine 47 and cysteine 172 are joined by a disulfide. Residues lysine 76, 104–109 (ATRSTE), 131–137 (RLKNYSS), and glutamate 156 contribute to the abscisate site. The Gate loop signature appears at 100–104 (SGLPA). The short motif at 130-132 (HRL) is the Latch loop element.

The protein belongs to the PYR/PYL/RCAR abscisic acid intracellular receptor family. Monomer. Interacts with PP2C50. Binding to PP2C50 is dependent on the presence of abscisic acid (ABA). Interacts with PP2C30 and PP2C53.

The protein resides in the cytoplasm. It is found in the cytosol. The protein localises to the nucleus. In terms of biological role, involved in abscisic acid (ABA) signaling during seed germination and abiotic stress response. Acts as a positive regulator of ABA-mediated inhibition of seed germination, and tolerance to drought and cold stresses. Together with PP2C50 and SAPK10, may form an ABA signaling module involved in stress response. Inhibits the protein phosphatases PP2C06 and PP2C09 when activated by abscisic acid (ABA). The polypeptide is Abscisic acid receptor PYL3 (Oryza sativa subsp. japonica (Rice)).